The following is a 298-amino-acid chain: Putative insertion sequence ATP-binding protein y4iQ/y4nD/y4sD (298 aa).

114 to 121 (GPPGGGKS) provides a ligand contact to ATP. Residues 276 to 298 (RQSEHDETLASDNQHDTFMPTAT) form a disordered region.

Belongs to the IS21/IS1162 putative ATP-binding protein family.

This chain is Putative insertion sequence ATP-binding protein y4iQ/y4nD/y4sD, found in Sinorhizobium fredii (strain NBRC 101917 / NGR234).